A 633-amino-acid polypeptide reads, in one-letter code: Probable extracellular metalloproteinase 5 (633 aa).

The first 20 residues, 1 to 20 (MHGLLLAAAGLLSLPLHVLA), serve as a signal peptide directing secretion. Positions 21–244 (HPQPSTNLAG…VHNVVDYVSH (224 aa)) are excised as a propeptide. A glycan (N-linked (GlcNAc...) asparagine) is linked at Asn-285. His-428 serves as a coordination point for Zn(2+). Glu-429 is a catalytic residue. His-432 is a Zn(2+) binding site. N-linked (GlcNAc...) asparagine glycans are attached at residues Asn-592 and Asn-621.

It belongs to the peptidase M36 family. Zn(2+) is required as a cofactor.

It is found in the secreted. In terms of biological role, secreted metalloproteinase probably acting as a virulence factor. This chain is Probable extracellular metalloproteinase 5 (MEP5), found in Trichophyton verrucosum (strain HKI 0517).